The following is a 405-amino-acid chain: L-rhamnonate dehydratase (405 aa).

Substrate is bound by residues histidine 33 and arginine 59. Mg(2+) is bound by residues aspartate 226, glutamate 252, and glutamate 280. Histidine 329 functions as the Proton acceptor in the catalytic mechanism. Glutamate 349 is a substrate binding site.

The protein belongs to the mandelate racemase/muconate lactonizing enzyme family. RhamD subfamily. Homooctamer; tetramer of dimers. It depends on Mg(2+) as a cofactor.

The enzyme catalyses L-rhamnonate = 2-dehydro-3-deoxy-L-rhamnonate + H2O. Its function is as follows. Catalyzes the dehydration of L-rhamnonate to 2-keto-3-deoxy-L-rhamnonate (KDR). The protein is L-rhamnonate dehydratase of Escherichia coli O81 (strain ED1a).